The primary structure comprises 318 residues: Formimidoylglutamase (318 aa).

Mn(2+) contacts are provided by histidine 124, aspartate 153, histidine 155, aspartate 157, cysteine 241, and aspartate 243.

This sequence belongs to the arginase family. Mn(2+) is required as a cofactor.

It carries out the reaction N-formimidoyl-L-glutamate + H2O = formamide + L-glutamate. It participates in amino-acid degradation; L-histidine degradation into L-glutamate; L-glutamate from N-formimidoyl-L-glutamate (hydrolase route): step 1/1. In terms of biological role, catalyzes the conversion of N-formimidoyl-L-glutamate to L-glutamate and formamide. The protein is Formimidoylglutamase of Fusobacterium nucleatum subsp. nucleatum (strain ATCC 25586 / DSM 15643 / BCRC 10681 / CIP 101130 / JCM 8532 / KCTC 2640 / LMG 13131 / VPI 4355).